The primary structure comprises 183 residues: Small ribosomal subunit protein uS4 (183 aa).

Positions 106-168 (RRLETLVYKK…ETSPFTDENH (63 aa)) constitute an S4 RNA-binding domain. The segment at 158 to 183 (NETSPFTDENHPLRMEMSGTKEEENE) is disordered. Residues 165–183 (DENHPLRMEMSGTKEEENE) show a composition bias toward basic and acidic residues.

Belongs to the universal ribosomal protein uS4 family. In terms of assembly, part of the 30S ribosomal subunit. Contacts protein S5. The interaction surface between S4 and S5 is involved in control of translational fidelity.

In terms of biological role, one of the primary rRNA binding proteins, it binds directly to 16S rRNA where it nucleates assembly of the body of the 30S subunit. Functionally, with S5 and S12 plays an important role in translational accuracy. This chain is Small ribosomal subunit protein uS4, found in Picrophilus torridus (strain ATCC 700027 / DSM 9790 / JCM 10055 / NBRC 100828 / KAW 2/3).